A 308-amino-acid polypeptide reads, in one-letter code: Heme A synthase (308 aa).

At 1-8 (MFKKRNLK) the chain is on the cytoplasmic side. A helical transmembrane segment spans residues 9–29 (WLSILATVIMAWVQLGGALVT). Topologically, residues 30 to 67 (KTGSENGCGASWPLCHGALLPQNLPIATIIELSHRATS) are extracellular. An intrachain disulfide couples Cys-37 to Cys-44. The active site involves Glu-60. His-63 contributes to the heme o binding site. Residues 68–88 (ALSLIVVLWLVITAWKNIGYI) form a helical membrane-spanning segment. At 89–93 (KEVKP) the chain is on the cytoplasmic side. The helical transmembrane segment at 94-114 (LCIISVAFLLIQALVGAAAVL) threads the bilayer. The Extracellular segment spans residues 115 to 123 (WQQNDYVLA). A helical transmembrane segment spans residues 124 to 144 (LHFGISLISFSSVFVLTLIIF). His-125 contacts heme o. Residues 145-161 (DVDQKYEANKVHIDRKL) lie on the Cytoplasmic side of the membrane. A helical membrane pass occupies residues 162 to 182 (RIYTWTMAICLYVGIYTGALV). The Extracellular portion of the chain corresponds to 183–215 (RHTKSSLAYGSWPLPFNDLIPHTEQDWVQLAHR). His-214 contacts heme b. The chain crosses the membrane as a helical span at residues 216-236 (TLALIASISVFLAFNYAIKHY). The Cytoplasmic segment spans residues 237–244 (QNNRTIRY). The chain crosses the membrane as a helical span at residues 245 to 265 (GYTAALLLIILQIVTGALSIF). Residues 266–270 (THVNL) lie on the Extracellular side of the membrane. The helical transmembrane segment at 271–291 (IIALLHALIITFEFGLIAYLI) threads the bilayer. His-276 contacts heme b. Residues 292 to 308 (VLLLRSQRVEKVKQNAY) lie on the Cytoplasmic side of the membrane.

This sequence belongs to the COX15/CtaA family. Type 1 subfamily. Interacts with CtaB. Requires heme b as cofactor.

The protein localises to the cell membrane. It carries out the reaction Fe(II)-heme o + 2 A + H2O = Fe(II)-heme a + 2 AH2. It functions in the pathway porphyrin-containing compound metabolism; heme A biosynthesis; heme A from heme O: step 1/1. Functionally, catalyzes the conversion of heme O to heme A by two successive hydroxylations of the methyl group at C8. The first hydroxylation forms heme I, the second hydroxylation results in an unstable dihydroxymethyl group, which spontaneously dehydrates, resulting in the formyl group of heme A. In Staphylococcus carnosus (strain TM300), this protein is Heme A synthase.